The chain runs to 100 residues: Large ribosomal subunit protein uL23 (100 aa).

It belongs to the universal ribosomal protein uL23 family. As to quaternary structure, part of the 50S ribosomal subunit. Contacts protein L29, and trigger factor when it is bound to the ribosome.

Its function is as follows. One of the early assembly proteins it binds 23S rRNA. One of the proteins that surrounds the polypeptide exit tunnel on the outside of the ribosome. Forms the main docking site for trigger factor binding to the ribosome. This Lacticaseibacillus casei (strain BL23) (Lactobacillus casei) protein is Large ribosomal subunit protein uL23.